Reading from the N-terminus, the 250-residue chain is Ribosomal RNA small subunit methyltransferase J (250 aa).

S-adenosyl-L-methionine is bound by residues 101–102 (RD), 117–118 (ER), 153–154 (SS), and Asp-171.

Belongs to the methyltransferase superfamily. RsmJ family.

It is found in the cytoplasm. The enzyme catalyses guanosine(1516) in 16S rRNA + S-adenosyl-L-methionine = N(2)-methylguanosine(1516) in 16S rRNA + S-adenosyl-L-homocysteine + H(+). Its function is as follows. Specifically methylates the guanosine in position 1516 of 16S rRNA. The chain is Ribosomal RNA small subunit methyltransferase J from Erwinia tasmaniensis (strain DSM 17950 / CFBP 7177 / CIP 109463 / NCPPB 4357 / Et1/99).